A 64-amino-acid polypeptide reads, in one-letter code: Cold shock protein CapA (64 aa).

A CSD domain is found at 7–64 (GTVKWFNDEKGFGFITPQGGGDDLFVHFKAIESDGFKSLKEGQTVSFVAEKGQKGMQA).

It is found in the cytoplasm. Functionally, affects cell viability at low temperatures. In Pseudomonas fragi, this protein is Cold shock protein CapA (capA).